A 169-amino-acid polypeptide reads, in one-letter code: Ribosome maturation factor RimM (169 aa).

Positions 97–169 (EDEVYFKDLI…KIVVDWEYDY (73 aa)) constitute a PRC barrel domain.

This sequence belongs to the RimM family. Binds ribosomal protein uS19.

The protein localises to the cytoplasm. Its function is as follows. An accessory protein needed during the final step in the assembly of 30S ribosomal subunit, possibly for assembly of the head region. Essential for efficient processing of 16S rRNA. May be needed both before and after RbfA during the maturation of 16S rRNA. It has affinity for free ribosomal 30S subunits but not for 70S ribosomes. The chain is Ribosome maturation factor RimM from Francisella tularensis subsp. tularensis (strain FSC 198).